The sequence spans 436 residues: Trigger factor (436 aa).

The region spanning 161–246 is the PPIase FKBP-type domain; that stretch reads GDQLNIDFVG…VNSVSAPQLP (86 aa).

The protein belongs to the FKBP-type PPIase family. Tig subfamily.

Its subcellular location is the cytoplasm. The catalysed reaction is [protein]-peptidylproline (omega=180) = [protein]-peptidylproline (omega=0). Functionally, involved in protein export. Acts as a chaperone by maintaining the newly synthesized protein in an open conformation. Functions as a peptidyl-prolyl cis-trans isomerase. The chain is Trigger factor from Ectopseudomonas mendocina (strain ymp) (Pseudomonas mendocina).